The following is a 449-amino-acid chain: Naphthalene 1,2-dioxygenase system, large oxygenase component (449 aa).

In terms of domain architecture, Rieske spans 39-137; the sequence is WLFLTHDSLI…LNKKCLGLKE (99 aa). Residues C81, H83, C101, and H104 each coordinate [2Fe-2S] cluster. 3 residues coordinate Fe cation: H208, H213, and D362.

It belongs to the bacterial ring-hydroxylating dioxygenase alpha subunit family. As to quaternary structure, the naphthalene dioxygenase (NDO) multicomponent enzyme system is composed of an electron transfer component and a dioxygenase component (iron sulfur protein (ISP)). The electron transfer component is composed of a ferredoxin reductase (NdoR) and a ferredoxin (NdoA), and the dioxygenase component is formed of a heterohexamer (trimer of heterodimers) of three large alpha subunits (NdoB) and three small beta subunits (NdoC). It depends on [2Fe-2S] cluster as a cofactor. The cofactor is Fe(2+).

The catalysed reaction is naphthalene + NADH + O2 + H(+) = (1R,2S)-1,2-dihydronaphthalene-1,2-diol + NAD(+). The protein operates within aromatic compound metabolism; naphthalene degradation. In terms of biological role, component of the naphthalene dioxygenase (NDO) multicomponent enzyme system which catalyzes the incorporation of both atoms of molecular oxygen into naphthalene to form cis-(1R,2S)-dihydroxy-1,2-dihydronaphthalene. The alpha subunit has a catalytic role in the holoenzyme. Also able to catalyze the cis-dihydroxylation of biphenyl and phenanthrene. The polypeptide is Naphthalene 1,2-dioxygenase system, large oxygenase component (Pseudomonas putida (Arthrobacter siderocapsulatus)).